Reading from the N-terminus, the 906-residue chain is Probable RNA-directed DNA polymerase from transposon BS (906 aa).

Residues 482–758 (AILRVQFFPK…SQAKYLGITL (277 aa)) enclose the Reverse transcriptase domain.

Mg(2+) serves as cofactor. Requires Mn(2+) as cofactor.

It carries out the reaction DNA(n) + a 2'-deoxyribonucleoside 5'-triphosphate = DNA(n+1) + diphosphate. This is Probable RNA-directed DNA polymerase from transposon BS from Drosophila melanogaster (Fruit fly).